The chain runs to 255 residues: Malonyl-[acyl-carrier protein] O-methyltransferase (255 aa).

It belongs to the methyltransferase superfamily.

It carries out the reaction malonyl-[ACP] + S-adenosyl-L-methionine = malonyl-[ACP] methyl ester + S-adenosyl-L-homocysteine. It functions in the pathway cofactor biosynthesis; biotin biosynthesis. Functionally, converts the free carboxyl group of a malonyl-thioester to its methyl ester by transfer of a methyl group from S-adenosyl-L-methionine (SAM). It allows to synthesize pimeloyl-ACP via the fatty acid synthetic pathway. The protein is Malonyl-[acyl-carrier protein] O-methyltransferase of Porphyromonas gingivalis (strain ATCC BAA-308 / W83).